The sequence spans 750 residues: Glutamate carboxypeptidase 2 (750 aa).

Residues 1-19 (MWNLLHETDSAVATARRPR) lie on the Cytoplasmic side of the membrane. Residue Ser-10 is modified to Phosphoserine. Residues 20-43 (WLCAGALVLAGGFFLLGFLFGWFI) form a helical; Signal-anchor for type II membrane protein membrane-spanning segment. The Extracellular portion of the chain corresponds to 44-750 (KSSNEATNIT…AAAETLSEVA (707 aa)). Residues Asn-51, Asn-76, Asn-121, Asn-140, Asn-153, and Asn-195 are each glycosylated (N-linked (GlcNAc...) asparagine). Substrate is bound by residues Arg-210 and Asn-257. Residues Thr-269 and Tyr-272 each contribute to the Ca(2+) site. Residues 274–587 (ANEYAYRRGI…QVRGGMVFEL (314 aa)) are NAALADase. The N-linked (GlcNAc...) asparagine glycan is linked to Asn-336. Zn(2+) contacts are provided by His-377 and Asp-387. Substrate is bound at residue Glu-424. The Nucleophile; for NAALADase activity role is filled by Glu-424. Glu-425 contacts Zn(2+). The Ca(2+) site is built by Glu-433 and Glu-436. Asp-453 lines the Zn(2+) pocket. N-linked (GlcNAc...) asparagine glycans are attached at residues Asn-459 and Asn-476. Substrate-binding positions include 517–518 (SG), Asn-519, 534–536 (RAR), Tyr-552, and 552–553 (YH). A Zn(2+)-binding site is contributed by His-553. Ser-628 serves as the catalytic Charge relay system. Asn-638 carries N-linked (GlcNAc...) asparagine glycosylation. Catalysis depends on charge relay system residues Asp-666 and His-689. 699 to 700 (KY) contributes to the substrate binding site.

Belongs to the peptidase M28 family. M28B subfamily. Homodimer. It depends on Zn(2+) as a cofactor. Post-translationally, the first two amino acids at the N-terminus of isoform PSMA' appear to be cleaved by limited proteolysis. In terms of processing, the N-terminus is blocked. In terms of tissue distribution, highly expressed in prostate epithelium. Detected in urinary bladder, kidney, testis, ovary, fallopian tube, breast, adrenal gland, liver, esophagus, stomach, small intestine, colon and brain (at protein level). Detected in the small intestine, brain, kidney, liver, spleen, colon, trachea, spinal cord and the capillary endothelium of a variety of tumors. Expressed specifically in jejunum brush border membranes. In the brain, highly expressed in the ventral striatum and brain stem. Also expressed in fetal liver and kidney. Isoform PSMA' is the most abundant form in normal prostate. Isoform PSMA-1 is the most abundant form in primary prostate tumors. Isoform PSMA-9 is specifically expressed in prostate cancer.

The protein localises to the cell membrane. It is found in the cytoplasm. It carries out the reaction Release of an unsubstituted, C-terminal glutamyl residue, typically from Ac-Asp-Glu or folylpoly-gamma-glutamates.. The NAALADase activity is inhibited by beta-NAAG, quisqualic acid, 2-(phosphonomethyl) pentanedioic acid (PMPA) and EDTA. Activated by cobalt. In terms of biological role, has both folate hydrolase and N-acetylated-alpha-linked-acidic dipeptidase (NAALADase) activity. Has a preference for tri-alpha-glutamate peptides. In the intestine, required for the uptake of folate. In the brain, modulates excitatory neurotransmission through the hydrolysis of the neuropeptide, N-aceylaspartylglutamate (NAAG), thereby releasing glutamate. Involved in prostate tumor progression. Its function is as follows. Also exhibits a dipeptidyl-peptidase IV type activity. In vitro, cleaves Gly-Pro-AMC. The sequence is that of Glutamate carboxypeptidase 2 from Homo sapiens (Human).